Reading from the N-terminus, the 89-residue chain is HssA/B-like protein 21 (89 aa).

This sequence belongs to the hssA/B family.

This chain is HssA/B-like protein 21 (hssl21), found in Dictyostelium discoideum (Social amoeba).